A 257-amino-acid polypeptide reads, in one-letter code: Acetylglutamate kinase (257 aa).

Substrate-binding positions include 43–44, Arg-65, and Asn-157; that span reads GG. ATP contacts are provided by residues 180–185 and 208–210; these read DVSGIL and IIT.

The protein belongs to the acetylglutamate kinase family. ArgB subfamily. Homodimer.

It localises to the cytoplasm. It carries out the reaction N-acetyl-L-glutamate + ATP = N-acetyl-L-glutamyl 5-phosphate + ADP. Its pathway is amino-acid biosynthesis; L-arginine biosynthesis; N(2)-acetyl-L-ornithine from L-glutamate: step 2/4. Its function is as follows. Catalyzes the ATP-dependent phosphorylation of N-acetyl-L-glutamate. The protein is Acetylglutamate kinase of Enterobacter sp. (strain 638).